We begin with the raw amino-acid sequence, 403 residues long: Lipase lipl-5 (403 aa).

An N-terminal signal peptide occupies residues 1–18; sequence MWRFAVFLAAFFVQDVVG. An N-linked (GlcNAc...) asparagine glycan is attached at asparagine 64. Serine 167 serves as the catalytic Nucleophile. N-linked (GlcNAc...) asparagine glycosylation is present at asparagine 271. Catalysis depends on charge relay system residues aspartate 343 and histidine 375.

The protein belongs to the AB hydrolase superfamily. Lipase family.

It is found in the lysosome lumen. The protein localises to the secreted. In terms of biological role, lipase involved in lipid homeostasis. Regulates mitochondrial lipid composition, in particular cardiolipins and coenzyme Q-9 levels, in response to nutrient availability. Does not affect global triglyceride levels in response to nutrient availability. However, in coelomocytes, specifically promotes triglyceride catabolism and lifespan extension in response to nutrient deprivation. In Caenorhabditis elegans, this protein is Lipase lipl-5.